The following is a 114-amino-acid chain: Cytochrome c2 (114 aa).

A Pyrrolidone carboxylic acid modification is found at glutamine 1. 4 residues coordinate heme c: cysteine 13, cysteine 16, histidine 17, and methionine 93.

It belongs to the cytochrome c family. In terms of processing, binds 1 heme c group covalently per subunit.

Cytochrome c2 is found mainly in purple, non-sulfur, photosynthetic bacteria where it functions as the electron donor to the oxidized bacteriochlorophyll in the photophosphorylation pathway. However, it may also have a role in the respiratory chain and is found in some non-photosynthetic bacteria. This Rhodopseudomonas palustris protein is Cytochrome c2 (cycA).